We begin with the raw amino-acid sequence, 466 residues long: Asparagine--tRNA ligase (466 aa).

Belongs to the class-II aminoacyl-tRNA synthetase family. Homodimer.

It is found in the cytoplasm. The catalysed reaction is tRNA(Asn) + L-asparagine + ATP = L-asparaginyl-tRNA(Asn) + AMP + diphosphate + H(+). The sequence is that of Asparagine--tRNA ligase from Idiomarina loihiensis (strain ATCC BAA-735 / DSM 15497 / L2-TR).